The following is a 1355-amino-acid chain: Probable major glycoprotein (1355 aa).

The signal sequence occupies residues 1 to 16 (MKKTMLAIILIPLVYA). N-linked (GlcNAc...) asparagine; by host glycosylation is found at Asn-81, Asn-112, Asn-129, Asn-169, Asn-173, Asn-192, Asn-542, Asn-655, Asn-682, Asn-744, Asn-780, Asn-811, Asn-815, Asn-860, Asn-865, Asn-882, Asn-895, Asn-1213, Asn-1225, Asn-1267, and Asn-1274. Positions 1245–1299 (QIVSMEMEIQDLKLELIQLQKINTSVHMENITGDIDAMKATIEEYRAEMAKLRVT) form a coiled coil. The chain crosses the membrane as a helical span at residues 1308 to 1328 (FIYAILGVIAIGALIAIIFMA).

It localises to the host membrane. This is Probable major glycoprotein (ORF46) from Ictaluridae (bullhead catfishes).